Consider the following 135-residue polypeptide: NAD(P)H-quinone oxidoreductase subunit 3 (135 aa).

The next 3 helical transmembrane spans lie at Ile-15–Val-35, Met-79–Val-99, and Leu-104–Val-124.

Belongs to the complex I subunit 3 family. In terms of assembly, NDH-1 can be composed of about 15 different subunits; different subcomplexes with different compositions have been identified which probably have different functions.

It is found in the cellular thylakoid membrane. The catalysed reaction is a plastoquinone + NADH + (n+1) H(+)(in) = a plastoquinol + NAD(+) + n H(+)(out). It catalyses the reaction a plastoquinone + NADPH + (n+1) H(+)(in) = a plastoquinol + NADP(+) + n H(+)(out). Functionally, NDH-1 shuttles electrons from an unknown electron donor, via FMN and iron-sulfur (Fe-S) centers, to quinones in the respiratory and/or the photosynthetic chain. The immediate electron acceptor for the enzyme in this species is believed to be plastoquinone. Couples the redox reaction to proton translocation, and thus conserves the redox energy in a proton gradient. Cyanobacterial NDH-1 also plays a role in inorganic carbon-concentration. The protein is NAD(P)H-quinone oxidoreductase subunit 3 of Trichodesmium erythraeum (strain IMS101).